The chain runs to 377 residues: Naringenin,2-oxoglutarate 3-dioxygenase (377 aa).

The Fe2OG dioxygenase domain occupies 193–297 (CVDMDQKVVV…RLSIATFQNP (105 aa)). Positions 220, 222, and 278 each coordinate Fe cation. 2-oxoglutarate is bound at residue arginine 288.

The protein belongs to the iron/ascorbate-dependent oxidoreductase family. Fe(2+) is required as a cofactor. Requires L-ascorbate as cofactor.

The catalysed reaction is a (2S)-flavan-4-one + 2-oxoglutarate + O2 = a (2R,3R)-dihydroflavonol + succinate + CO2. Its pathway is secondary metabolite biosynthesis; flavonoid biosynthesis. Catalyzes the 3-beta-hydroxylation of 2S-flavanones to 2R,3R-dihydroflavonols which are intermediates in the biosynthesis of flavonols, anthocyanidins, catechins and proanthocyanidins in plants. This is Naringenin,2-oxoglutarate 3-dioxygenase from Hordeum vulgare (Barley).